A 131-amino-acid chain; its full sequence is Small ribosomal subunit protein uS11 (131 aa).

It belongs to the universal ribosomal protein uS11 family. In terms of assembly, part of the 30S ribosomal subunit. Interacts with proteins S7 and S18. Binds to IF-3.

In terms of biological role, located on the platform of the 30S subunit, it bridges several disparate RNA helices of the 16S rRNA. Forms part of the Shine-Dalgarno cleft in the 70S ribosome. The chain is Small ribosomal subunit protein uS11 from Paramagnetospirillum magneticum (strain ATCC 700264 / AMB-1) (Magnetospirillum magneticum).